Consider the following 465-residue polypeptide: Soluble pyridine nucleotide transhydrogenase (465 aa).

36-45 (ERYNNVGGGC) serves as a coordination point for FAD.

This sequence belongs to the class-I pyridine nucleotide-disulfide oxidoreductase family. It depends on FAD as a cofactor.

Its subcellular location is the cytoplasm. It catalyses the reaction NAD(+) + NADPH = NADH + NADP(+). Conversion of NADPH, generated by peripheral catabolic pathways, to NADH, which can enter the respiratory chain for energy generation. The polypeptide is Soluble pyridine nucleotide transhydrogenase (Serratia proteamaculans (strain 568)).